Reading from the N-terminus, the 75-residue chain is UPF0352 protein VV1166 (75 aa).

It belongs to the UPF0352 family.

This Vibrio vulnificus (strain YJ016) protein is UPF0352 protein VV1166.